The chain runs to 251 residues: uncharacterized protein (251 aa).

Residue 10–34 (ITGAGSGIGKKAAVMFAERGAKVAI) coordinates NADP(+). Ser-139 is a substrate binding site. The active-site Proton acceptor is Tyr-152.

It belongs to the short-chain dehydrogenases/reductases (SDR) family.

This is an uncharacterized protein from Thermotoga maritima (strain ATCC 43589 / DSM 3109 / JCM 10099 / NBRC 100826 / MSB8).